Consider the following 96-residue polypeptide: Myoglobin (96 aa).

Residues Gly1 to Gly96 enclose the Globin domain. Ser3 carries the post-translational modification Phosphoserine. His61 serves as a coordination point for nitrite. His61 provides a ligand contact to O2. Position 64 is a phosphothreonine (Thr64).

Belongs to the globin family. In terms of assembly, monomeric.

It localises to the cytoplasm. It is found in the sarcoplasm. It carries out the reaction Fe(III)-heme b-[protein] + nitric oxide + H2O = Fe(II)-heme b-[protein] + nitrite + 2 H(+). It catalyses the reaction H2O2 + AH2 = A + 2 H2O. Monomeric heme protein which primary function is to store oxygen and facilitate its diffusion within muscle tissues. Reversibly binds oxygen through a pentacoordinated heme iron and enables its timely and efficient release as needed during periods of heightened demand. Depending on the oxidative conditions of tissues and cells, and in addition to its ability to bind oxygen, it also has a nitrite reductase activity whereby it regulates the production of bioactive nitric oxide. Under stress conditions, like hypoxia and anoxia, it also protects cells against reactive oxygen species thanks to its pseudoperoxidase activity. This is Myoglobin (MB) from Ailuropoda melanoleuca (Giant panda).